The following is a 338-amino-acid chain: Ketol-acid reductoisomerase (NADP(+)) (338 aa).

The KARI N-terminal Rossmann domain maps to 1-181 (MKVFYDKDCD…GGGRTGIIET (181 aa)). NADP(+)-binding positions include 24–27 (YGSQ), Arg-47, Ser-50, Thr-52, and 82–85 (DEFQ). Residue His-107 is part of the active site. Gly-133 is an NADP(+) binding site. Residues 182 to 327 (TFKDETETDL…EQLRSMMPWI (146 aa)) enclose the KARI C-terminal knotted domain. Positions 190, 194, 226, and 230 each coordinate Mg(2+). Residue Ser-251 participates in substrate binding.

The protein belongs to the ketol-acid reductoisomerase family. It depends on Mg(2+) as a cofactor.

It carries out the reaction (2R)-2,3-dihydroxy-3-methylbutanoate + NADP(+) = (2S)-2-acetolactate + NADPH + H(+). The enzyme catalyses (2R,3R)-2,3-dihydroxy-3-methylpentanoate + NADP(+) = (S)-2-ethyl-2-hydroxy-3-oxobutanoate + NADPH + H(+). The protein operates within amino-acid biosynthesis; L-isoleucine biosynthesis; L-isoleucine from 2-oxobutanoate: step 2/4. It participates in amino-acid biosynthesis; L-valine biosynthesis; L-valine from pyruvate: step 2/4. Involved in the biosynthesis of branched-chain amino acids (BCAA). Catalyzes an alkyl-migration followed by a ketol-acid reduction of (S)-2-acetolactate (S2AL) to yield (R)-2,3-dihydroxy-isovalerate. In the isomerase reaction, S2AL is rearranged via a Mg-dependent methyl migration to produce 3-hydroxy-3-methyl-2-ketobutyrate (HMKB). In the reductase reaction, this 2-ketoacid undergoes a metal-dependent reduction by NADPH to yield (R)-2,3-dihydroxy-isovalerate. In Pseudomonas putida (strain W619), this protein is Ketol-acid reductoisomerase (NADP(+)).